A 291-amino-acid chain; its full sequence is Pantothenate synthetase (291 aa).

Residue 33-40 participates in ATP binding; it reads MGALHEGH. His-40 acts as the Proton donor in catalysis. Gln-64 contacts (R)-pantoate. Gln-64 is a binding site for beta-alanine. An ATP-binding site is contributed by 157-160; sequence GEKD. Gln-163 is a (R)-pantoate binding site. ATP contacts are provided by residues Val-186 and 194-197; that span reads LSSR.

Belongs to the pantothenate synthetase family. As to quaternary structure, homodimer.

The protein localises to the cytoplasm. The enzyme catalyses (R)-pantoate + beta-alanine + ATP = (R)-pantothenate + AMP + diphosphate + H(+). It participates in cofactor biosynthesis; (R)-pantothenate biosynthesis; (R)-pantothenate from (R)-pantoate and beta-alanine: step 1/1. In terms of biological role, catalyzes the condensation of pantoate with beta-alanine in an ATP-dependent reaction via a pantoyl-adenylate intermediate. The polypeptide is Pantothenate synthetase (Rubrobacter xylanophilus (strain DSM 9941 / JCM 11954 / NBRC 16129 / PRD-1)).